Reading from the N-terminus, the 327-residue chain is Transaldolase (327 aa).

Residue Lys132 is the Schiff-base intermediate with substrate of the active site.

This sequence belongs to the transaldolase family. Type 1 subfamily.

Its subcellular location is the cytoplasm. The enzyme catalyses D-sedoheptulose 7-phosphate + D-glyceraldehyde 3-phosphate = D-erythrose 4-phosphate + beta-D-fructose 6-phosphate. The protein operates within carbohydrate degradation; pentose phosphate pathway; D-glyceraldehyde 3-phosphate and beta-D-fructose 6-phosphate from D-ribose 5-phosphate and D-xylulose 5-phosphate (non-oxidative stage): step 2/3. Transaldolase is important for the balance of metabolites in the pentose-phosphate pathway. This is Transaldolase from Chlamydia pneumoniae (Chlamydophila pneumoniae).